The sequence spans 157 residues: Cyclic pyranopterin monophosphate synthase (157 aa).

Residues 74–76 (MCH) and 112–113 (ME) each bind substrate. D127 is an active-site residue.

The protein belongs to the MoaC family. In terms of assembly, homohexamer; trimer of dimers.

It carries out the reaction (8S)-3',8-cyclo-7,8-dihydroguanosine 5'-triphosphate = cyclic pyranopterin phosphate + diphosphate. It functions in the pathway cofactor biosynthesis; molybdopterin biosynthesis. Catalyzes the conversion of (8S)-3',8-cyclo-7,8-dihydroguanosine 5'-triphosphate to cyclic pyranopterin monophosphate (cPMP). This Campylobacter lari (strain RM2100 / D67 / ATCC BAA-1060) protein is Cyclic pyranopterin monophosphate synthase.